Here is a 963-residue protein sequence, read N- to C-terminus: Protein translocase subunit SecA (963 aa).

ATP contacts are provided by residues glutamine 87, 105-109 (GEGKT), and aspartate 524. Zn(2+) contacts are provided by cysteine 946, cysteine 948, cysteine 957, and histidine 958.

It belongs to the SecA family. As to quaternary structure, monomer and homodimer. Part of the essential Sec protein translocation apparatus which comprises SecA, SecYEG and auxiliary proteins SecDF-YajC and YidC. The cofactor is Zn(2+).

The protein localises to the cell inner membrane. Its subcellular location is the cytoplasm. The enzyme catalyses ATP + H2O + cellular proteinSide 1 = ADP + phosphate + cellular proteinSide 2.. Its function is as follows. Part of the Sec protein translocase complex. Interacts with the SecYEG preprotein conducting channel. Has a central role in coupling the hydrolysis of ATP to the transfer of proteins into and across the cell membrane, serving both as a receptor for the preprotein-SecB complex and as an ATP-driven molecular motor driving the stepwise translocation of polypeptide chains across the membrane. This Methylobacterium radiotolerans (strain ATCC 27329 / DSM 1819 / JCM 2831 / NBRC 15690 / NCIMB 10815 / 0-1) protein is Protein translocase subunit SecA.